The following is a 350-amino-acid chain: 3-dehydroquinate synthase (350 aa).

NAD(+) is bound by residues 106–110, 130–131, lysine 143, and lysine 152; these read GVIGD and TS. 3 residues coordinate Zn(2+): glutamate 185, histidine 246, and histidine 263.

Belongs to the sugar phosphate cyclases superfamily. Dehydroquinate synthase family. It depends on Co(2+) as a cofactor. Requires Zn(2+) as cofactor. The cofactor is NAD(+).

Its subcellular location is the cytoplasm. The catalysed reaction is 7-phospho-2-dehydro-3-deoxy-D-arabino-heptonate = 3-dehydroquinate + phosphate. The protein operates within metabolic intermediate biosynthesis; chorismate biosynthesis; chorismate from D-erythrose 4-phosphate and phosphoenolpyruvate: step 2/7. In terms of biological role, catalyzes the conversion of 3-deoxy-D-arabino-heptulosonate 7-phosphate (DAHP) to dehydroquinate (DHQ). This is 3-dehydroquinate synthase from Clostridium botulinum (strain Alaska E43 / Type E3).